A 162-amino-acid polypeptide reads, in one-letter code: uncharacterized protein (162 aa).

This is an uncharacterized protein from Rhodobacter capsulatus (Rhodopseudomonas capsulata).